We begin with the raw amino-acid sequence, 768 residues long: Transferrin receptor protein 1 (768 aa).

Residues 1–68 lie on the Cytoplasmic side of the membrane; sequence MMDQARSAFS…VAKPKRLNGY (68 aa). Residues 1-70 form a mediates interaction with SH3BP4 region; it reads MMDQARSAFS…KPKRLNGYVC (70 aa). Ser10 and Ser19 each carry phosphoserine. Tyr20 carries the post-translational modification Phosphotyrosine. The short motif at 20–23 is the Endocytosis signal element; the sequence is YTRF. Thr21 is subject to Phosphothreonine. The residue at position 24 (Ser24) is a Phosphoserine. The Stop-transfer sequence signature appears at 61 to 64; that stretch reads KPKR. Residues 69 to 89 form a helical membrane-spanning segment; the sequence is VCYGIIAVITFFLIGFMIGYL. A lipid anchor (S-palmitoyl cysteine) is attached at Cys70. The Extracellular portion of the chain corresponds to 90–768; the sequence is AYCKRVESKT…GDIWDIDNEF (679 aa). The PA domain occupies 231–321; sequence SKATTVTGKL…GTGDPYTPGF (91 aa). Asn259 and Asn325 each carry an N-linked (GlcNAc...) asparagine glycan. Residues 577–768 are ligand-binding; that stretch reads TMDTYDVLSK…GDIWDIDNEF (192 aa). A Cell attachment site motif is present at residues 654 to 656; it reads RGD. N-linked (GlcNAc...) asparagine glycans are attached at residues Asn730 and Asn735.

It belongs to the peptidase M28 family. M28B subfamily. As to quaternary structure, homodimer; disulfide-linked. Binds one transferrin or HFE molecule per subunit. Interacts with SH3BP4. Interacts with SH3BP3. Interacts with STEAP3; facilitates TFRC endocytosis in erythroid precursor cells. Stearoylated by ZDHHC6 which inhibits TFRC-mediated activation of the JNK pathway and promotes mitochondrial fragmentation. Stearoylation does not affect iron uptake.

Its subcellular location is the cell membrane. It localises to the melanosome. Its function is as follows. Cellular uptake of iron occurs via receptor-mediated endocytosis of ligand-occupied transferrin receptor into specialized endosomes. Endosomal acidification leads to iron release. The apotransferrin-receptor complex is then recycled to the cell surface with a return to neutral pH and the concomitant loss of affinity of apotransferrin for its receptor. Transferrin receptor is necessary for development of erythrocytes and the nervous system. Positively regulates T and B cell proliferation through iron uptake. Acts as a lipid sensor that regulates mitochondrial fusion by regulating activation of the JNK pathway. When dietary levels of stearate (C18:0) are low, promotes activation of the JNK pathway, resulting in HUWE1-mediated ubiquitination and subsequent degradation of the mitofusin MFN2 and inhibition of mitochondrial fusion. When dietary levels of stearate (C18:0) are high, TFRC stearoylation inhibits activation of the JNK pathway and thus degradation of the mitofusin MFN2. Mediates uptake of NICOL1 into fibroblasts where it may regulate extracellular matrix production. This chain is Transferrin receptor protein 1 (TFRC), found in Sus scrofa (Pig).